The sequence spans 763 residues: Thyrotropin receptor (763 aa).

A signal peptide spans 1 to 21 (MRPTPLLRLALFLVLPSSLGG). Residues 22 to 412 (ERCPSPPCEC…EFNPCEDIMG (391 aa)) lie on the Extracellular side of the membrane. Cysteine 31 and cysteine 41 are oxidised to a cystine. One copy of the LRR 1 repeat lies at 51 to 74 (PPSTQTLKFIETHLKTIPSRAFSN). N-linked (GlcNAc...) asparagine glycosylation is found at asparagine 77 and asparagine 99. 5 LRR repeats span residues 125–150 (LPLL…IYST), 151–174 (DVFF…AFQG), 176–199 (CNET…AFNG), 201–223 (KLDA…AFAG), and 225–248 (YSGP…GLEH). 2 N-linked (GlcNAc...) asparagine glycosylation sites follow: asparagine 177 and asparagine 198. N-linked (GlcNAc...) asparagine glycosylation is present at asparagine 302. Tyrosine 384 is modified (sulfotyrosine). Residues 413-440 (YKFLRIVVWFVSLLALLGNVFVLVILLT) traverse the membrane as a helical segment. Over 441–449 (SHYKLTVPR) the chain is Cytoplasmic. Residues 450–472 (FLMCNLAFADFCMGLYLLLIASV) traverse the membrane as a helical segment. Topologically, residues 473–493 (DLYTQSEYYNHAIDWQTGPGC) are extracellular. A disulfide bridge connects residues cysteine 493 and cysteine 568. The helical transmembrane segment at 494–516 (NTAGFFTVFASELSVYTLTVITL) threads the bilayer. At 517-536 (ERWHAITFAMRLDRKIRLWH) the chain is on the cytoplasmic side. The helical transmembrane segment at 537 to 559 (AYVIMLGGWVCCFLLALLPLVGI) threads the bilayer. Residues 560-579 (SSYAKVSICLPMDTETPLAL) lie on the Extracellular side of the membrane. The helical transmembrane segment at 580 to 601 (AYIILVLLLNIIAFIIVCACYV) threads the bilayer. Residues 602–624 (KIYITVRNPHYNPGDKDTRIAKR) lie on the Cytoplasmic side of the membrane. A helical transmembrane segment spans residues 625–648 (MAVLIFTDFMCMAPISFYALSALM). The Extracellular segment spans residues 649 to 659 (NKPLITVTNSK). Residues 660 to 681 (ILLVLFYPLNSCANPFLYAIFT) traverse the membrane as a helical segment. Residues 682–763 (KAFQRDVFML…TSKEYKRTVL (82 aa)) are Cytoplasmic-facing. The tract at residues 742-763 (ENSHLTPKQQDQTSKEYKRTVL) is disordered. The span at 744 to 753 (SHLTPKQQDQ) shows a compositional bias: polar residues. The span at 754–763 (TSKEYKRTVL) shows a compositional bias: basic and acidic residues. The PDZ-binding signature appears at 761 to 763 (TVL).

This sequence belongs to the G-protein coupled receptor 1 family. FSH/LSH/TSH subfamily. In terms of assembly, interacts with heterodimer GPHA2:GPHB5; this interaction stimulates cAMP production. Interacts (via the PDZ-binding motif) with SCRIB; regulates TSHR trafficking and function. Glycosylated. In terms of processing, sulfated. Sulfation on Tyr-384 plays a role in thyrotropin receptor binding and activation.

It is found in the cell membrane. Its subcellular location is the basolateral cell membrane. Receptor for the thyroid-stimulating hormone (TSH) or thyrotropin. Also acts as a receptor for the heterodimeric glycoprotein hormone (GPHA2:GPHB5) or thyrostimulin. The activity of this receptor is mediated by G proteins which activate adenylate cyclase. Plays a central role in controlling thyroid cell metabolism. This Bos taurus (Bovine) protein is Thyrotropin receptor (TSHR).